We begin with the raw amino-acid sequence, 130 residues long: Fumarate reductase subunit C (130 aa).

3 helical membrane-spanning segments follow: residues 33–53 (AVTTMWFSILLIYGLFALKGG), 60–80 (FVTFLQNPVILLVNIITLLGA), and 109–129 (VIKLLWAVTIIVTMIILGIAL).

Belongs to the FrdC family. Part of an enzyme complex containing four subunits: a flavoprotein (FrdA), an iron-sulfur protein (FrdB), and two hydrophobic anchor proteins (FrdC and FrdD).

Its subcellular location is the cell inner membrane. In terms of biological role, two distinct, membrane-bound, FAD-containing enzymes are responsible for the catalysis of fumarate and succinate interconversion; fumarate reductase is used in anaerobic growth, and succinate dehydrogenase is used in aerobic growth. Anchors the catalytic components of the fumarate reductase complex to the cell inner membrane, binds quinones. This Photorhabdus laumondii subsp. laumondii (strain DSM 15139 / CIP 105565 / TT01) (Photorhabdus luminescens subsp. laumondii) protein is Fumarate reductase subunit C.